A 544-amino-acid polypeptide reads, in one-letter code: Pectinesterase 3 (544 aa).

Residues Asn-174, Asn-257, and Asn-291 are each glycosylated (N-linked (GlcNAc...) asparagine). The substrate site is built by Thr-306 and Gln-336. The active-site Proton donor is the Asp-359. Catalysis depends on Asp-380, which acts as the Nucleophile. Residues Arg-448 and Trp-450 each contribute to the substrate site. A glycan (N-linked (GlcNAc...) asparagine) is linked at Asn-532.

This sequence in the N-terminal section; belongs to the PMEI family. It in the C-terminal section; belongs to the pectinesterase family.

The protein localises to the secreted. It localises to the cell wall. It catalyses the reaction [(1-&gt;4)-alpha-D-galacturonosyl methyl ester](n) + n H2O = [(1-&gt;4)-alpha-D-galacturonosyl](n) + n methanol + n H(+). The protein operates within glycan metabolism; pectin degradation; 2-dehydro-3-deoxy-D-gluconate from pectin: step 1/5. Functionally, acts in the modification of cell walls via demethylesterification of cell wall pectin. This Solanum lycopersicum (Tomato) protein is Pectinesterase 3 (PME3).